Here is a 350-residue protein sequence, read N- to C-terminus: Biotin synthase (350 aa).

Residues 42-269 (NEVQVSTLCS…QSHVRLSAGR (228 aa)) form the Radical SAM core domain. 3 residues coordinate [4Fe-4S] cluster: cysteine 57, cysteine 61, and cysteine 64. [2Fe-2S] cluster is bound by residues cysteine 101, cysteine 132, cysteine 192, and arginine 264.

This sequence belongs to the radical SAM superfamily. Biotin synthase family. As to quaternary structure, homodimer. Requires [4Fe-4S] cluster as cofactor. [2Fe-2S] cluster is required as a cofactor.

It catalyses the reaction (4R,5S)-dethiobiotin + (sulfur carrier)-SH + 2 reduced [2Fe-2S]-[ferredoxin] + 2 S-adenosyl-L-methionine = (sulfur carrier)-H + biotin + 2 5'-deoxyadenosine + 2 L-methionine + 2 oxidized [2Fe-2S]-[ferredoxin]. It functions in the pathway cofactor biosynthesis; biotin biosynthesis; biotin from 7,8-diaminononanoate: step 2/2. In terms of biological role, catalyzes the conversion of dethiobiotin (DTB) to biotin by the insertion of a sulfur atom into dethiobiotin via a radical-based mechanism. The chain is Biotin synthase from Saccharophagus degradans (strain 2-40 / ATCC 43961 / DSM 17024).